The chain runs to 95 residues: Aspartyl/glutamyl-tRNA(Asn/Gln) amidotransferase subunit C (95 aa).

It belongs to the GatC family. In terms of assembly, heterotrimer of A, B and C subunits.

The enzyme catalyses L-glutamyl-tRNA(Gln) + L-glutamine + ATP + H2O = L-glutaminyl-tRNA(Gln) + L-glutamate + ADP + phosphate + H(+). It carries out the reaction L-aspartyl-tRNA(Asn) + L-glutamine + ATP + H2O = L-asparaginyl-tRNA(Asn) + L-glutamate + ADP + phosphate + 2 H(+). Functionally, allows the formation of correctly charged Asn-tRNA(Asn) or Gln-tRNA(Gln) through the transamidation of misacylated Asp-tRNA(Asn) or Glu-tRNA(Gln) in organisms which lack either or both of asparaginyl-tRNA or glutaminyl-tRNA synthetases. The reaction takes place in the presence of glutamine and ATP through an activated phospho-Asp-tRNA(Asn) or phospho-Glu-tRNA(Gln). The chain is Aspartyl/glutamyl-tRNA(Asn/Gln) amidotransferase subunit C from Campylobacter curvus (strain 525.92).